Here is a 443-residue protein sequence, read N- to C-terminus: ATP-dependent protease ATPase subunit HslU (443 aa).

ATP is bound by residues Ile-19, 61-66, Asp-256, Glu-321, and Arg-393; that span reads GVGKTE.

This sequence belongs to the ClpX chaperone family. HslU subfamily. In terms of assembly, a double ring-shaped homohexamer of HslV is capped on each side by a ring-shaped HslU homohexamer. The assembly of the HslU/HslV complex is dependent on binding of ATP.

It localises to the cytoplasm. Functionally, ATPase subunit of a proteasome-like degradation complex; this subunit has chaperone activity. The binding of ATP and its subsequent hydrolysis by HslU are essential for unfolding of protein substrates subsequently hydrolyzed by HslV. HslU recognizes the N-terminal part of its protein substrates and unfolds these before they are guided to HslV for hydrolysis. The sequence is that of ATP-dependent protease ATPase subunit HslU from Cupriavidus pinatubonensis (strain JMP 134 / LMG 1197) (Cupriavidus necator (strain JMP 134)).